Consider the following 562-residue polypeptide: Glutamate--tRNA ligase (562 aa).

A 'HIGH' region motif is present at residues 104–114 (PNPDFYMTLGN).

The protein belongs to the class-I aminoacyl-tRNA synthetase family. Glutamate--tRNA ligase type 2 subfamily.

It localises to the cytoplasm. It catalyses the reaction tRNA(Glu) + L-glutamate + ATP = L-glutamyl-tRNA(Glu) + AMP + diphosphate. In terms of biological role, catalyzes the attachment of glutamate to tRNA(Glu) in a two-step reaction: glutamate is first activated by ATP to form Glu-AMP and then transferred to the acceptor end of tRNA(Glu). This chain is Glutamate--tRNA ligase, found in Ignicoccus hospitalis (strain KIN4/I / DSM 18386 / JCM 14125).